We begin with the raw amino-acid sequence, 998 residues long: 2-imino-3-(indol-3-yl)propanoate dimerase (998 aa).

The catalysed reaction is 2 H2O2 = O2 + 2 H2O. It catalyses the reaction 2 2-iminio-3-(indol-3-yl)propanoate + H2O2 = indole-3-pyruvate imine dimer + 2 H2O. It functions in the pathway pigment biosynthesis; violacein biosynthesis. Its function is as follows. Catalyzes the hydrogen peroxide-dependent dimerization of two L-tryptophan-derived molecules (imine form of indole 3-pyruvate (IPA)), to form an uncharacterized product suggested to be indole-3-pyruvate imine dimer that can spontaneously convert into dichlorochromopyrrolate (CPA). The uncharacterized product is the substrate of VioE. The sequence is that of 2-imino-3-(indol-3-yl)propanoate dimerase (vioB) from Chromobacterium violaceum (strain ATCC 12472 / DSM 30191 / JCM 1249 / CCUG 213 / NBRC 12614 / NCIMB 9131 / NCTC 9757 / MK).